Here is a 223-residue protein sequence, read N- to C-terminus: Cytidylate kinase (223 aa).

An ATP-binding site is contributed by 12–20 (GPSGVGKGT).

This sequence belongs to the cytidylate kinase family. Type 1 subfamily.

The protein resides in the cytoplasm. The enzyme catalyses CMP + ATP = CDP + ADP. The catalysed reaction is dCMP + ATP = dCDP + ADP. The protein is Cytidylate kinase of Xylella fastidiosa (strain M12).